A 729-amino-acid polypeptide reads, in one-letter code: Triadin (729 aa).

The segment at 1–28 (MTEITAEGNASTTTTVIDSKNGSVPKSP) is disordered. Topologically, residues 1-47 (MTEITAEGNASTTTTVIDSKNGSVPKSPGKVLKRTVTEDIVTTFSSP) are cytoplasmic. The span at 8–24 (GNASTTTTVIDSKNGSV) shows a compositional bias: polar residues. Residues 48–68 (AAWLLVIALIITWSAVAIVMF) traverse the membrane as a helical segment. The Lumenal segment spans residues 69–729 (DLVDYKNFSA…NSPGQKQQGQ (661 aa)). Asparagine 75 carries an N-linked (GlcNAc...) asparagine glycan. Positions 117-129 (EDEEDDDGDEDTD) are enriched in acidic residues. Disordered regions lie at residues 117-265 (EDEE…EQKD), 281-682 (DLKP…PTKQ), and 705-729 (PFTP…QQGQ). Composition is skewed to basic and acidic residues over residues 130–265 (KGEI…EQKD), 309–357 (LEEK…KASE), 371–433 (AKKD…KEEI), 444–509 (GKKE…EVKP), 516–531 (GKKE…KEAK), 538–562 (VQIH…EKVL), 580–598 (KKAE…DKPK), and 609–674 (ESGK…KEGT). Residue asparagine 647 is glycosylated (N-linked (GlcNAc...) asparagine). Polar residues predominate over residues 715 to 729 (SSGQANSPGQKQQGQ).

Homooligomer of variable subunit number; disulfide-linked. Interacts with CASQ1 and RYR1 in skeletal muscle. Interacts with CASQ2. Phosphorylated by CaMK2. In terms of processing, N-glycosylated.

The protein localises to the cell membrane. It localises to the sarcoplasmic reticulum membrane. Its function is as follows. Contributes to the regulation of lumenal Ca2+ release via the sarcoplasmic reticulum calcium release channels RYR1 and RYR2, a key step in triggering skeletal and heart muscle contraction. Required for normal organization of the triad junction, where T-tubules and the sarcoplasmic reticulum terminal cisternae are in close contact. Required for normal skeletal muscle strength. Plays a role in excitation-contraction coupling in the heart and in regulating the rate of heart beats. The chain is Triadin (TRDN) from Homo sapiens (Human).